The primary structure comprises 304 residues: Xylanase inhibitor protein 1 (304 aa).

The N-terminal stretch at methionine 1 to alanine 29 is a signal peptide. The region spanning glycine 34 to alanine 304 is the GH18 domain. Cystine bridges form between cysteine 53/cysteine 93 and cysteine 190/cysteine 219.

The protein belongs to the glycosyl hydrolase 18 family. Xylanase inhibitor subfamily. As to quaternary structure, binds to fungal GH11 xylanases. As to expression, constitutively expressed in shoots.

The protein localises to the secreted. Functionally, fungal xylanase inhibitor. Possesses competitive inhibiting activity against fungal endo-1,4-beta-D-xylanases belonging to glycoside hydrolase family 11 (GH11). May function in plant defense against secreted fungal pathogen xylanases. Is similar to class III chitinases, but does not exhibit chitinase activity. The protein is Xylanase inhibitor protein 1 of Oryza sativa subsp. japonica (Rice).